A 562-amino-acid chain; its full sequence is Ycf55-like protein (562 aa).

The region spanning 7–125 (TIVIVDEDPV…DLVTGLKQVH (119 aa)) is the Response regulatory domain.

This sequence belongs to the ycf55 family.

The polypeptide is Ycf55-like protein (Synechocystis sp. (strain ATCC 27184 / PCC 6803 / Kazusa)).